A 351-amino-acid polypeptide reads, in one-letter code: GDSL esterase/lipase At3g53100 (351 aa).

The first 24 residues, 1-24 (MQKMRVSGFRVLLLVSCFFCKSKG), serve as a signal peptide directing secretion. Serine 36 (nucleophile) is an active-site residue. Asparagine 234, asparagine 254, and asparagine 318 each carry an N-linked (GlcNAc...) asparagine glycan. Catalysis depends on residues aspartate 326 and histidine 329.

It belongs to the 'GDSL' lipolytic enzyme family.

The protein localises to the secreted. This Arabidopsis thaliana (Mouse-ear cress) protein is GDSL esterase/lipase At3g53100.